The chain runs to 930 residues: Probable SapB synthase (930 aa).

Residues Tyr256–Arg516 enclose the Protein kinase domain. Residues Leu262–Val270 and Lys285 each bind ATP. Asp395 functions as the Proton acceptor in the catalytic mechanism. The helical transmembrane segment at Tyr447 to Asp467 threads the bilayer. The segment covering Gly501–Thr527 has biased composition (basic and acidic residues). 2 disordered regions span residues Gly501–Met558 and Pro911–Pro930. Positions Ala532–Val546 are enriched in low complexity. A compositionally biased stretch (basic and acidic residues) spans Arg547–Asp556.

The protein in the N-terminal section; belongs to the protein kinase superfamily.

The protein localises to the cell membrane. In terms of biological role, required for aerial hyphae formation. Probably involved in processing the precursor of SapB to its mature form. The sequence is that of Probable SapB synthase from Streptomyces coelicolor (strain ATCC BAA-471 / A3(2) / M145).